A 322-amino-acid chain; its full sequence is Ferredoxin--NADP reductase (322 aa).

FAD-binding residues include L87, F119, D279, and T320.

Belongs to the ferredoxin--NADP reductase type 2 family. Homodimer. Requires FAD as cofactor.

It catalyses the reaction 2 reduced [2Fe-2S]-[ferredoxin] + NADP(+) + H(+) = 2 oxidized [2Fe-2S]-[ferredoxin] + NADPH. The protein is Ferredoxin--NADP reductase of Streptococcus suis (strain 98HAH33).